The following is a 143-amino-acid chain: Large ribosomal subunit protein uL15 (143 aa).

Over residues methionine 1 to glycine 13 the composition is skewed to basic residues. Residues methionine 1–glycine 39 are disordered. Positions glycine 29 to glycine 38 are enriched in gly residues.

It belongs to the universal ribosomal protein uL15 family. In terms of assembly, part of the 50S ribosomal subunit.

Binds to the 23S rRNA. In Methanocaldococcus jannaschii (strain ATCC 43067 / DSM 2661 / JAL-1 / JCM 10045 / NBRC 100440) (Methanococcus jannaschii), this protein is Large ribosomal subunit protein uL15.